The following is a 345-amino-acid chain: MSRQAKDDFLRHYTVSDPRTHPKGYTEYKVTAQFISKRDPEDVKEVVVWKRYSDFRKLHGDLAYTHRNLFRRLEEFPAFPRGQVFGRFEASVIEERRKGAEDLLRFTVHIPALNNSPQLKEFFRGGEVTRPSEVSGDLHILPPPLIPTPPPDEPRVQPHETWLPQPLPAERRGLEELEVPADPPPSSPAQEALDLLFNCGSTEEASSSPARGPLTEAELALFDPFSKEEGAGPSPTHIGELAALEAGSGRPDQEPWEPGGQAEEDDEEGEPAPAYLSQATELITQALRDEKAGAYPAALQGYRDGVHILLQGVPGDPSPARREGVKKKAAEYLKRAEEILHLHLS.

The PX domain occupies 1-130; that stretch reads MSRQAKDDFL…EFFRGGEVTR (130 aa). R105 bears the Omega-N-methylarginine mark. Residues 133–163 form a disordered region; it reads EVSGDLHILPPPLIPTPPPDEPRVQPHETWL. Positions 141-151 are enriched in pro residues; that stretch reads LPPPLIPTPPP. 2 positions are modified to phosphoserine: S208 and S234. The interval 226–274 is disordered; sequence SKEEGAGPSPTHIGELAALEAGSGRPDQEPWEPGGQAEEDDEEGEPAPA. An MIT domain is found at 272 to 345; sequence APAYLSQATE…AEEILHLHLS (74 aa).

It belongs to the sorting nexin family.

May be involved in several stages of intracellular trafficking. Overexpression of SNX15 disrupts the normal trafficking of proteins from the plasma membrane to recycling endosomes or the TGN. The chain is Sorting nexin-15 (SNX15) from Bos taurus (Bovine).